The following is a 476-amino-acid chain: Glycogen synthase (476 aa).

Residue K15 participates in ADP-alpha-D-glucose binding.

Belongs to the glycosyltransferase 1 family. Bacterial/plant glycogen synthase subfamily.

The enzyme catalyses [(1-&gt;4)-alpha-D-glucosyl](n) + ADP-alpha-D-glucose = [(1-&gt;4)-alpha-D-glucosyl](n+1) + ADP + H(+). Its pathway is glycan biosynthesis; glycogen biosynthesis. Synthesizes alpha-1,4-glucan chains using ADP-glucose. The chain is Glycogen synthase from Yersinia enterocolitica serotype O:8 / biotype 1B (strain NCTC 13174 / 8081).